The following is a 322-amino-acid chain: Secretion system apparatus protein SsaQ (322 aa).

The protein belongs to the FliN/MopA/SpaO family.

Functionally, part of a type III secretion system. The protein is Secretion system apparatus protein SsaQ (ssaQ) of Salmonella typhimurium (strain LT2 / SGSC1412 / ATCC 700720).